Reading from the N-terminus, the 353-residue chain is (3aS,4S,5R,7aS)-5-hydroxy-7a-methyl-1-oxo-octahydro-1H-indene-4-carboxyl-CoA dehydrogenase (353 aa).

Residues 22-24 (GMG), 171-173 (AGG), and 194-195 (GT) contribute to the FMN site.

This sequence belongs to the nitronate monooxygenase family.

It carries out the reaction (3aS,4S,5R,7aS)-5-hydroxy-7a-methyl-1-oxo-octahydro-1H-indene-4-carboxyl-CoA + NAD(+) = (5R,7aS)-5-hydroxy-7a-methyl-1-oxo-2,3,5,6,7,7a-hexahydro-1H-indene-carboxyl-CoA + NADH + H(+). It participates in steroid metabolism; cholesterol degradation. Functionally, involved in the final steps of cholesterol and steroid degradation. Probably catalyzes the introduction of a double bound into the C ring of 5OH-HIC-CoA, leading to the formation of (5R,7aS)-5-hydroxy-7a-methyl-1-oxo-3,5,6,7-tetrahydro-2H-indene-4-carboxyl-CoA. The protein is (3aS,4S,5R,7aS)-5-hydroxy-7a-methyl-1-oxo-octahydro-1H-indene-4-carboxyl-CoA dehydrogenase of Rhodococcus jostii (strain RHA1).